Consider the following 245-residue polypeptide: NLP effector protein Pc118551 (245 aa).

An N-terminal signal peptide occupies residues 1–19 (MNLRAFLLSAVAALVAVQA). Positions 121–127 (QRRHLWE) match the Hepta-peptide GHRHDWE motif motif. Asparagine 140 carries an N-linked (GlcNAc...) asparagine glycan.

It belongs to the Necrosis inducing protein (NPP1) family.

It localises to the secreted. Functionally, secreted effector that contributes strongly to virulence during infection by P.capsici. This Phytophthora capsici protein is NLP effector protein Pc118551.